We begin with the raw amino-acid sequence, 368 residues long: Aminomethyltransferase (368 aa).

It belongs to the GcvT family. The glycine cleavage system is composed of four proteins: P, T, L and H.

The enzyme catalyses N(6)-[(R)-S(8)-aminomethyldihydrolipoyl]-L-lysyl-[protein] + (6S)-5,6,7,8-tetrahydrofolate = N(6)-[(R)-dihydrolipoyl]-L-lysyl-[protein] + (6R)-5,10-methylene-5,6,7,8-tetrahydrofolate + NH4(+). Its function is as follows. The glycine cleavage system catalyzes the degradation of glycine. The chain is Aminomethyltransferase from Xylella fastidiosa (strain 9a5c).